Here is a 386-residue protein sequence, read N- to C-terminus: Succinate--CoA ligase [ADP-forming] subunit beta (386 aa).

Residues 9-244 (KAILRSYGVS…LDEEDPKEIE (236 aa)) enclose the ATP-grasp domain. ATP is bound by residues K46, 53–55 (GRG), E99, C102, and E107. Mg(2+) contacts are provided by N199 and D213. Substrate is bound by residues N264 and 321–323 (GIM).

Belongs to the succinate/malate CoA ligase beta subunit family. Heterotetramer of two alpha and two beta subunits. Mg(2+) is required as a cofactor.

It carries out the reaction succinate + ATP + CoA = succinyl-CoA + ADP + phosphate. It catalyses the reaction GTP + succinate + CoA = succinyl-CoA + GDP + phosphate. Its pathway is carbohydrate metabolism; tricarboxylic acid cycle; succinate from succinyl-CoA (ligase route): step 1/1. Succinyl-CoA synthetase functions in the citric acid cycle (TCA), coupling the hydrolysis of succinyl-CoA to the synthesis of either ATP or GTP and thus represents the only step of substrate-level phosphorylation in the TCA. The beta subunit provides nucleotide specificity of the enzyme and binds the substrate succinate, while the binding sites for coenzyme A and phosphate are found in the alpha subunit. In Bacillus cytotoxicus (strain DSM 22905 / CIP 110041 / 391-98 / NVH 391-98), this protein is Succinate--CoA ligase [ADP-forming] subunit beta.